A 646-amino-acid chain; its full sequence is Choline transporter-like protein 1 (646 aa).

The Cytoplasmic portion of the chain corresponds to 1-27 (MGCCGCGSEEGSVRQWKPLEQRSCTDV). A helical membrane pass occupies residues 28 to 48 (LWLLIFVLFCIGMAIICGFAI). Over 49 to 207 (ASGAAQRLVF…RVITGVMTSK (159 aa)) the chain is Extracellular. An N-linked (GlcNAc...) asparagine glycan is attached at Asn-133. The helical transmembrane segment at 208–228 (EIIVGLCLMSLVLSILLMVII) threads the bilayer. Residues 229 to 233 (RYISK) are Cytoplasmic-facing. A helical transmembrane segment spans residues 234-254 (VLVWILAILTIIGSIGGTAVL). Residues 255 to 281 (WWLYADHKKTLKLDPSQGDVAADNVTA) are Extracellular-facing. Asn-278 carries an N-linked (GlcNAc...) asparagine glycan. Residues 282–302 (LLVCAIIATVITVILLLLMLI) traverse the membrane as a helical segment. The Cytoplasmic segment spans residues 303–308 (MRKRVA). The helical transmembrane segment at 309 to 329 (LTIALFHVAGKVFIHIPFLIF) threads the bilayer. Residues 330–331 (QS) lie on the Extracellular side of the membrane. A helical transmembrane segment spans residues 332 to 352 (LWTFLALAFFWIYWIAVLLLL). Topologically, residues 353–373 (ATAGYPQKKDQGYVEFKVSGP) are cytoplasmic. The helical transmembrane segment at 374 to 394 (LQYTWIYHLVGLIWISEFILA) threads the bilayer. At 395–435 (CQQMTIAGAVVTYYFTRDKHNLPATPILASMCRLIKYHLGT) the chain is on the extracellular side. A helical membrane pass occupies residues 436–456 (VAKGSFIITLIKIPQMILVYI). The Cytoplasmic segment spans residues 457–530 (HSQLKGKENA…RVAAINTVGD (74 aa)). Residues 531 to 551 (FVLFLGKLLIVLVTGFVGIIL) traverse the membrane as a helical segment. The Extracellular segment spans residues 552–559 (LNYQRDYT). The helical transmembrane segment at 560–580 (VWVLPLIIICLFAFFVSHCFL) threads the bilayer. At 581 to 646 (SIYEMVVDVL…KSMASGSDNA (66 aa)) the chain is on the cytoplasmic side.

This sequence belongs to the CTL (choline transporter-like) family. Present in myelinated structures from brain and spinal cord (at protein level).

It is found in the cell membrane. Its subcellular location is the mitochondrion outer membrane. It carries out the reaction choline(out) + n H(+)(in) = choline(in) + n H(+)(out). The enzyme catalyses ethanolamine(out) + n H(+)(in) = ethanolamine(in) + n H(+)(out). In terms of biological role, probable choline transporter. May be involved in membrane synthesis and myelin production. This chain is Choline transporter-like protein 1 (slc44a1), found in Torpedo marmorata (Marbled electric ray).